The sequence spans 361 residues: Histidinol-phosphate aminotransferase (361 aa).

The residue at position 219 (Lys219) is an N6-(pyridoxal phosphate)lysine.

It belongs to the class-II pyridoxal-phosphate-dependent aminotransferase family. Histidinol-phosphate aminotransferase subfamily. In terms of assembly, homodimer. Requires pyridoxal 5'-phosphate as cofactor.

The catalysed reaction is L-histidinol phosphate + 2-oxoglutarate = 3-(imidazol-4-yl)-2-oxopropyl phosphate + L-glutamate. It participates in amino-acid biosynthesis; L-histidine biosynthesis; L-histidine from 5-phospho-alpha-D-ribose 1-diphosphate: step 7/9. In Acinetobacter baumannii (strain ACICU), this protein is Histidinol-phosphate aminotransferase.